A 346-amino-acid chain; its full sequence is Hexosaminidase D (346 aa).

The active-site Proton donor is the Glu-141.

It belongs to the glycosyl hydrolase 20 family. As to quaternary structure, homodimer; disulfide-linked.

The protein resides in the cytoplasm. It is found in the nucleus. Its subcellular location is the extracellular vesicle. The catalysed reaction is Hydrolysis of terminal non-reducing N-acetyl-D-hexosamine residues in N-acetyl-beta-D-hexosaminides.. With respect to regulation, inhibited by O-(2-acetamido-2-deoxy-D-glucopyranosylidene)amino N-phenylcarbamate (PUGNAc). Inhibited by galacto-NAG-thiazoline. Its function is as follows. Has hexosaminidase activity. Responsible for the cleavage of the monosaccharides N-acetylglucosamine (GlcNAc) and N-acetylgalactosamine (GalNAc) from cellular substrates. Has a preference for galactosaminide over glucosaminide substrates. This Bos taurus (Bovine) protein is Hexosaminidase D.